A 359-amino-acid chain; its full sequence is Archaemetzincin-2 (359 aa).

H254 lines the Zn(2+) pocket. E255 acts as the Proton acceptor in catalysis. The Zn(2+) site is built by H258, H264, C265, C270, C289, and C292.

Belongs to the peptidase M54 family. Zn(2+) serves as cofactor. Predominantly expressed in testis.

Probable zinc metalloprotease. This is Archaemetzincin-2 (Amz2) from Mus musculus (Mouse).